The following is a 560-amino-acid chain: Leiomodin-3 (560 aa).

Residues 1–49 (MSEHSRNSDQEELLDEEINEDEILANLSAEELKELQSEMEVMAPDPSLP) form an interaction with tropomyosin alpha region. The stretch at 16-42 (EEINEDEILANLSAEELKELQSEMEVM) forms a coiled coil. 2 disordered regions span residues 45–68 (DPSL…NFNH) and 127–217 (IVAN…SKLD). The span at 142 to 167 (ETDEEDEEEEDDDDDDEGEDDGEESE) shows a compositional bias: acidic residues. Residues 168-182 (ETNREEEGKAKEQIR) are compositionally biased toward basic and acidic residues. Over residues 183 to 192 (NCENNCQQVT) the composition is skewed to polar residues. Residues 194 to 217 (KAFKEQRDRPEAQEQSEKKISKLD) show a composition bias toward basic and acidic residues. Residues 386–425 (VTNLLTRNQDKQRQKRQEEQKQQQLKEQKKLIAMLENGLG) adopt a coiled-coil conformation. 2 disordered regions span residues 437 to 480 (PKPD…KYRT) and 494 to 530 (QRKS…PPLV). The segment covering 448–458 (QPPPPRPPNPQ) has biased composition (pro residues). A compositionally biased stretch (basic and acidic residues) spans 498–516 (RMPEAREPPEKTNLKDVIK). A WH2 domain is found at 534–553 (PRDQLLNDIRHSSVAYLKPV).

Belongs to the tropomodulin family. In terms of assembly, may interact with tropomyosin alpha (TPM1/2) N-terminus. Interacts with KLHL40; leading to stabilization. In terms of processing, ubiquitinated, leading to its degradation. Interaction with KLHL40 negatively regulates ubiquitination and degradation. As to expression, expressed in cardiac and at higher levels in skeletal muscles (at protein level).

Its subcellular location is the cytoplasm. It localises to the myofibril. The protein localises to the sarcomere. The protein resides in the m line. It is found in the a band. Its subcellular location is the cytoskeleton. Essential for the organization of sarcomeric actin thin filaments in skeletal muscle. Increases the rate of actin polymerization. The protein is Leiomodin-3 (LMOD3) of Homo sapiens (Human).